Consider the following 597-residue polypeptide: MEFPGSSDNYLTITGPGHPFLTGTETFHTPSLGDEEFEIPPISLDSDPSLAVSDVVGHFDDLGDPSGVQDEGFATQYGVQTLDMPVEMTHEVMDQTGGLLGAGLAMDLDHPIVTPYSANPPVTIDVSMTDMSSGILGHSQLTTIDQSELSSQLGLSLGGGAILHPVQSPEDHLSPTPSPTSSLHDEDMEDFRRITAPKNIIVEQAKKPKTPKKKKKKDPNEPQKPLSAYALFFRDTQAAIKGQNPNATFGEVSKIVASMWDSLGEEQKQVYKRKTEAAKKEYLKALALYKANQLSQVAVDTVDLDPPAVPALLSESPVPSPSVVTATSIPECVSSPSAPSPPSQTVALPQQSIAKIIISKQILPAGQNPTSIALSQGVVTVIPATVVTSRGLPLAQLQPSPQAQRVTRSVLQAAMQMPPRLQPPPLQQMQQPPRLQQMAPAQQPSITILQSPPPLQPMQKVRLTLQQPPPLQIKIIPPPLQPQPQAVQVQNQSLSVINVSTSPEAPASPPEQLEVLPEVVQEESPPPQMDVELVSSSPPPSLSPQPRCVRSGCENAPIECKDWDNEYCSNECVVKHCRDTFMAWIAARSQGTLATVK.

Disordered stretches follow at residues 160-224 (GAIL…EPQK) and 520-546 (VQEE…SPQP). Positions 207-217 (KPKTPKKKKKK) are enriched in basic residues. The short motif at 212–217 (KKKKKK) is the Nuclear localization signal element. Residues 222–290 (PQKPLSAYAL…EYLKALALYK (69 aa)) constitute a DNA-binding region (HMG box).

In terms of assembly, component of the PNUTS-PP1 phosphatase complex.

The protein localises to the nucleus. Its subcellular location is the chromosome. Transcription factor that modulates cell fate reprogramming from the somatic state to the pluripotent and neuronal fate. Also acts as a regulatory component of protein phosphatase 1 (PP1) complexes. Component of the PNUTS-PP1 protein phosphatase complex, a PP1 complex that regulates RNA polymerase II transcription pause-release. PNUTS-PP1 also plays a role in the control of chromatin structure and cell cycle progression during the transition from mitosis into interphase. This Xenopus tropicalis (Western clawed frog) protein is TOX high mobility group box family member 4 (tox4).